The following is a 329-amino-acid chain: DNA-directed RNA polymerase subunit alpha (329 aa).

The interval 1–235 (MQNSIMDFLR…EQLEAFVDLR (235 aa)) is alpha N-terminal domain (alpha-NTD). The segment at 249-329 (FEPILLRPVD…NWPPSSILDE (81 aa)) is alpha C-terminal domain (alpha-CTD).

Belongs to the RNA polymerase alpha chain family. As to quaternary structure, homodimer. The RNAP catalytic core consists of 2 alpha, 1 beta, 1 beta' and 1 omega subunit. When a sigma factor is associated with the core the holoenzyme is formed, which can initiate transcription.

The enzyme catalyses RNA(n) + a ribonucleoside 5'-triphosphate = RNA(n+1) + diphosphate. Functionally, DNA-dependent RNA polymerase catalyzes the transcription of DNA into RNA using the four ribonucleoside triphosphates as substrates. This chain is DNA-directed RNA polymerase subunit alpha, found in Buchnera aphidicola subsp. Acyrthosiphon pisum (strain APS) (Acyrthosiphon pisum symbiotic bacterium).